The following is a 27-amino-acid chain: Conotoxin as14a (27 aa).

2 disulfide bridges follow: Cys-6–Cys-26 and Cys-10–Cys-22.

The protein belongs to the conotoxin L superfamily. In terms of tissue distribution, expressed by the venom duct.

It localises to the secreted. Its function is as follows. In vivo, intracranial injection, elicits scratching and grooming activity in mice. The protein is Conotoxin as14a of Conus cancellatus (Cancellate cone).